We begin with the raw amino-acid sequence, 285 residues long: Acetylglutamate kinase (285 aa).

Substrate contacts are provided by residues 64–65 (GG), arginine 86, and asparagine 179.

It belongs to the acetylglutamate kinase family. ArgB subfamily.

Its subcellular location is the plastid. It is found in the chloroplast. It carries out the reaction N-acetyl-L-glutamate + ATP = N-acetyl-L-glutamyl 5-phosphate + ADP. Its pathway is amino-acid biosynthesis; L-arginine biosynthesis; N(2)-acetyl-L-ornithine from L-glutamate: step 2/4. Catalyzes the ATP-dependent phosphorylation of N-acetyl-L-glutamate. The polypeptide is Acetylglutamate kinase (Pyropia yezoensis (Susabi-nori)).